A 185-amino-acid polypeptide reads, in one-letter code: Putative manganese efflux pump MntP (185 aa).

6 helical membrane-spanning segments follow: residues 4–24 (LLLSSLVIAVGLAMDSFSVSL), 43–63 (IFFGFFQFAMPLLGWGIGVPI), 67–87 (IDPFGYWIVVGLFFFIGGKMI), 107–127 (LLLAVATSIDALAVGISFALI), 131–151 (VLLPAVIIGVVAFLFSFFGVL), and 165–185 (QILGGVILVLIGIKFLIEYCL).

This sequence belongs to the MntP (TC 9.B.29) family.

It is found in the cell membrane. Probably functions as a manganese efflux pump. This Methanocorpusculum labreanum (strain ATCC 43576 / DSM 4855 / Z) protein is Putative manganese efflux pump MntP.